Consider the following 172-residue polypeptide: Bifunctional protein PyrR (172 aa).

Positions 90-102 (LVLVDDVLMSGRT) match the PRPP-binding motif.

This sequence belongs to the purine/pyrimidine phosphoribosyltransferase family. PyrR subfamily.

It catalyses the reaction UMP + diphosphate = 5-phospho-alpha-D-ribose 1-diphosphate + uracil. Functionally, regulates the transcription of the pyrimidine nucleotide (pyr) operon in response to exogenous pyrimidines. In terms of biological role, also displays a weak uracil phosphoribosyltransferase activity which is not physiologically significant. In Pseudomonas putida (strain GB-1), this protein is Bifunctional protein PyrR.